Reading from the N-terminus, the 711-residue chain is MESQMPFNEKIDYGLHALVILAQYHNVAVNPEEVKHKFDLDGKGLDLVAWLLAAKSLELKMKRVKKSIERLPFIHLPALIWRDDGQHVILMKIDTQTNRYLIFDLEERNPKVLSAAEFHEIFQGGMILITSRASIMGQLAKFDFTWFIPAVIKYRKIFVETIIVSIFLQLFALITPLFFQVVMDKVLVHRGFSTLNVITVALSVVVIFEIVLSGLRTYIFSHSTSRIDVELGAKLFRHLLALPISYFENRRVGDTVARVRELDQIRNFLTGQALTSVLDLLFSFIFFAVMWYYSPKLTIVILLSLPCYIAWSIFISPILRRRLDEKFARNADNQSFLVESVSAIDTIKALAVTPQMTNIWDKQLASYVSADFRVTVLATIGQQGVQLIQKTVMIINLWLGAHLVISGDLSIGQLITFNMLSGQVIAPVVRLAQLWQDFQQVGISITRLGDVLNSPTENYQGKLSLPEIFGDIAFKHIRFRYKPDAPIILDDVNLSVKQGEVIGIVGRSGSGKSTLTKLLQRFYIPENGQVLIDGHDLALADPNWLRRQIGVVLQDNVLLNRSIRDNIALTDPSMSMERVIYAAKLAGAHDFISELREGYNTIVGELGAGLSGGQRQRIAIARALVNNPRILIFDEATSALDYESEHIIMQNMQKICHGRTVIIIAHRLSTVKNADRIIVMEKGHIVEQGKHNQLLENENGLYYYLNQLQSN.

The Peptidase C39 domain maps to 1 to 129 (MESQMPFNEK…EIFQGGMILI (129 aa)). Residue His87 is part of the active site. Residues 158–440 (FVETIIVSIF…LAQLWQDFQQ (283 aa)) form the ABC transmembrane type-1 domain. 5 helical membrane passes run 162–182 (IIVSIFLQLFALITPLFFQVV), 195–215 (LNVITVALSVVVIFEIVLSGL), 273–293 (ALTSVLDLLFSFIFFAVMWYY), 299–319 (IVILLSLPCYIAWSIFISPIL), and 392–412 (VMIINLWLGAHLVISGDLSIG). The ABC transporter domain maps to 472–707 (IAFKHIRFRY…ENGLYYYLNQ (236 aa)). 506-513 (GRSGSGKS) contacts ATP.

The protein belongs to the ABC transporter superfamily. Protein-1 exporter (TC 3.A.1.109) family. In terms of assembly, homodimer.

The protein localises to the cell membrane. Functionally, involved in the transport of the toxin RTX-III. This is Toxin RTX-III translocation ATP-binding protein (apxIIIB) from Actinobacillus pleuropneumoniae (Haemophilus pleuropneumoniae).